Reading from the N-terminus, the 169-residue chain is Succinate dehydrogenase cytochrome b560 subunit, mitochondrial (169 aa).

The transit peptide at 1 to 29 (MAALLLRHVGRHCLRAHLSPQLCIRNAVP) directs the protein to the mitochondrion. Residues 30–62 (LGTTAKEEMERFWNKNLGSNRPLSPHITIYRWS) are Mitochondrial matrix-facing. A helical transmembrane segment spans residues 63–92 (LPMAMSICHRGTGIALSAGVSLFGLSALLL). Residues 93–112 (PGNFESHLELVKSLCLGPTL) lie on the Mitochondrial intermembrane side of the membrane. Residues 113–137 (IYTAKFGIVFPLMYHTWNGIRHLIW) form a helical membrane-spanning segment. Position 127 (His127) interacts with heme b. The Mitochondrial matrix segment spans residues 138 to 144 (DLGKGLT). The chain crosses the membrane as a helical span at residues 145–166 (IPQLTQSGVVVLILTVLSSVGL). Residues 167–169 (AAM) are Mitochondrial intermembrane-facing.

This sequence belongs to the cytochrome b560 family. As to quaternary structure, component of complex II composed of four subunits: the flavoprotein (FP) SDHA, iron-sulfur protein (IP) SDHB, and a cytochrome b560 composed of SDHC and SDHD. Heme b is required as a cofactor. Detected in heart muscle (at protein level).

The protein localises to the mitochondrion inner membrane. The protein operates within carbohydrate metabolism; tricarboxylic acid cycle. Membrane-anchoring subunit of succinate dehydrogenase (SDH) that is involved in complex II of the mitochondrial electron transport chain and is responsible for transferring electrons from succinate to ubiquinone (coenzyme Q). SDH also oxidizes malate to the non-canonical enol form of oxaloacetate, enol-oxaloacetate. Enol-oxaloacetate, which is a potent inhibitor of the succinate dehydrogenase activity, is further isomerized into keto-oxaloacetate. The chain is Succinate dehydrogenase cytochrome b560 subunit, mitochondrial (SDHC) from Sus scrofa (Pig).